Reading from the N-terminus, the 199-residue chain is Protein MA_3591 (199 aa).

The 192-residue stretch at 5 to 196 (TEGRVAVKLA…EKEPEGEVIE (192 aa)) folds into the AMMECR1 domain.

In Methanosarcina acetivorans (strain ATCC 35395 / DSM 2834 / JCM 12185 / C2A), this protein is Protein MA_3591.